We begin with the raw amino-acid sequence, 288 residues long: Nucleotide-binding protein APP7_0339 (288 aa).

8–15 (GRSGSGKS) is a binding site for ATP. A GTP-binding site is contributed by 56 to 59 (DIRN).

It belongs to the RapZ-like family.

In terms of biological role, displays ATPase and GTPase activities. The chain is Nucleotide-binding protein APP7_0339 from Actinobacillus pleuropneumoniae serotype 7 (strain AP76).